A 473-amino-acid polypeptide reads, in one-letter code: Vasculin-like protein 1 (473 aa).

A compositionally biased stretch (polar residues) spans 14 to 25; it reads STPQSSKSSTAT. The tract at residues 14–55 is disordered; the sequence is STPQSSKSSTATFDKHGEHLSRGEGRFGISRRRHNSSDGFFN. Residues 26-38 show a composition bias toward basic and acidic residues; that stretch reads FDKHGEHLSRGEG. Phosphoserine is present on residues Ser49 and Ser76. Disordered stretches follow at residues 88–127 and 155–189; these read GTTG…RKGC and DFPS…AKQP. The segment covering 103–112 has biased composition (polar residues); that stretch reads SQRSGGSSTG. Basic residues predominate over residues 113–125; that stretch reads NHRHWNGSFHSRK. Residue Ser199 is modified to Phosphoserine. 2 disordered regions span residues 235 to 267 and 281 to 316; these read LVPK…SRES and LAAG…RRTT. Phosphoserine is present on Ser289. The segment covering 292-309 has biased composition (low complexity); that stretch reads ESPSSTTPPIEISSSRLT. Thr298 carries the post-translational modification Phosphothreonine. A Phosphoserine modification is found at Ser381. The interval 453 to 473 is disordered; the sequence is ECEDSDSETSSSQTSDDDAWK.

The protein belongs to the vasculin family.

Its subcellular location is the nucleus. Functionally, possible transcription factor. The polypeptide is Vasculin-like protein 1 (Gpbp1l1) (Mus musculus (Mouse)).